The primary structure comprises 290 residues: MEGLVVKNYAGFYYVDTGKAIYMCKARGKFKKDNIKILTGDRVIIRELVPNSEGVIESLLPRKNELIRPPIANVDQVLLVFAFADPFPSTELIDRLLVMAYALRLEVVLVFNKFDLVNPESQKLFEYYKKILPKVVAITARGDTGIDELTDYLNQKISVLAGPSGVGKSTLINRLVPGAKLATGEVSPKIKRGRHTTRHVELIKLPFGGFIADTPGFSNLTLPEMDKLELQSYFPEFNQNRKYCYFPNCLHVKEPNCRVRELLETGEIPPFRYENYLTFLEEITSDERSS.

One can recognise a CP-type G domain in the interval 63–220 (KNELIRPPIA…IADTPGFSNL (158 aa)). GTP contacts are provided by residues 112–115 (NKFD) and 162–170 (GPSGVGKST). 4 residues coordinate Zn(2+): cysteine 244, cysteine 249, histidine 251, and cysteine 257.

The protein belongs to the TRAFAC class YlqF/YawG GTPase family. RsgA subfamily. In terms of assembly, monomer. Associates with 30S ribosomal subunit, binds 16S rRNA. Requires Zn(2+) as cofactor.

The protein localises to the cytoplasm. Its function is as follows. One of several proteins that assist in the late maturation steps of the functional core of the 30S ribosomal subunit. Helps release RbfA from mature subunits. May play a role in the assembly of ribosomal proteins into the subunit. Circularly permuted GTPase that catalyzes slow GTP hydrolysis, GTPase activity is stimulated by the 30S ribosomal subunit. The polypeptide is Small ribosomal subunit biogenesis GTPase RsgA (Carboxydothermus hydrogenoformans (strain ATCC BAA-161 / DSM 6008 / Z-2901)).